Reading from the N-terminus, the 591-residue chain is MTLDPTKHPDWKIALDAESRMKTVETLAAELGLEKAELLPYGHYMGKVEQQAVMQRLKDRPNGKYIDVTAITPTPLGEGKSTTTIGLVQGLARRGRRSSAAIRQPSGGPTMGMKGSAAGGGLSQCIPLTPYSLNFTGDLHAVGAAHNLGMTALTSRMQHERNYDDATLEKLSGMARLNIDPTRINTGWVMDFCVQALRNIIIGIEGDGRRNDGFMMRSHFDITVASEVMCILSIARDLRDLRERMGRMVLAHDRNGKPVTTSDLGVAGAMTAWLVEAAKPNLIQTIEGQPVFVHTGPFANIALGQSSVIADRVALKLSDYHVTESGFAAEMGYEKFWNLKCHYSGLVPDAAVVVATVRALKNHGGAPQPKPGQALPEPYTREDVGLVEAGCANLLHHLGIVRRSGVPAVVCINKFHTDTKAEVDAIRRICEQAGARVALSEHWEKGGEGALELADAVTDACNEKNEFRPLYNWNSPLTERITTIAQEVYGADGVEFEPLAAQRLKDLQERPDADELGVCMVKTQYSLSDKPALKGVPKGWRLHVRDVLFFGGAGLVAPVSGDISLMPGTGSKPAFRNIDVDVETGKVTGLF.

Position 74–81 (74–81 (TPLGEGKS)) interacts with ATP.

This sequence belongs to the formate--tetrahydrofolate ligase family.

It carries out the reaction (6S)-5,6,7,8-tetrahydrofolate + formate + ATP = (6R)-10-formyltetrahydrofolate + ADP + phosphate. It functions in the pathway one-carbon metabolism; tetrahydrofolate interconversion. This Desulfovibrio desulfuricans (strain ATCC 27774 / DSM 6949 / MB) protein is Formate--tetrahydrofolate ligase.